An 845-amino-acid polypeptide reads, in one-letter code: Protein P (845 aa).

Residues 1-179 (MPLSYQHFLK…FCGSPYSWEQ (179 aa)) form a terminal protein domain (TP) region. Residues 180–348 (ELHHGRLVTK…YCLSHLVNLL (169 aa)) are spacer. 2 disordered regions span residues 188 to 211 (TKTS…SRSS) and 288 to 317 (YSHL…ARSQ). Polar residues-rich tracts occupy residues 199 to 211 (VCSQ…SRSS) and 290 to 301 (HLSTSKRQSSSG). Positions 349 to 692 (EDWGPCTDHG…YMNLYPVARQ (344 aa)) are polymerase/reverse transcriptase domain (RT). Residues 359–602 (EHHIRIPRTP…YSLNFMGYII (244 aa)) form the Reverse transcriptase domain. Residues Asp431, Asp553, and Asp554 each coordinate Mg(2+).

This sequence belongs to the hepadnaviridae P protein family.

It catalyses the reaction DNA(n) + a 2'-deoxyribonucleoside 5'-triphosphate = DNA(n+1) + diphosphate. It carries out the reaction Endonucleolytic cleavage to 5'-phosphomonoester.. With respect to regulation, activated by host HSP70 and HSP40 in vitro to be able to bind the epsilon loop of the pgRNA. Because deletion of the RNase H region renders the protein partly chaperone-independent, the chaperones may be needed indirectly to relieve occlusion of the RNA-binding site by this domain. Inhibited by several reverse-transcriptase inhibitors: Lamivudine, Adefovir and Entecavir. Its function is as follows. Multifunctional enzyme that converts the viral RNA genome into dsDNA in viral cytoplasmic capsids. This enzyme displays a DNA polymerase activity that can copy either DNA or RNA templates, and a ribonuclease H (RNase H) activity that cleaves the RNA strand of RNA-DNA heteroduplexes in a partially processive 3'- to 5'-endonucleasic mode. Neo-synthesized pregenomic RNA (pgRNA) are encapsidated together with the P protein, and reverse-transcribed inside the nucleocapsid. Initiation of reverse-transcription occurs first by binding the epsilon loop on the pgRNA genome, and is initiated by protein priming, thereby the 5'-end of (-)DNA is covalently linked to P protein. Partial (+)DNA is synthesized from the (-)DNA template and generates the relaxed circular DNA (RC-DNA) genome. After budding and infection, the RC-DNA migrates in the nucleus, and is converted into a plasmid-like covalently closed circular DNA (cccDNA). The activity of P protein does not seem to be necessary for cccDNA generation, and is presumably released from (+)DNA by host nuclear DNA repair machinery. The chain is Protein P from Homo sapiens (Human).